Here is a 70-residue protein sequence, read N- to C-terminus: MKAKEVIEILEIIIYIVVVPSLIVYYVSHNTVYVAITVTLTLNLARKTYSTKKKIEKMMKKVEKALEFFS.

This is an uncharacterized protein from Thermoproteus tenax virus 1 (strain KRA1) (TTV1).